An 88-amino-acid polypeptide reads, in one-letter code: Small ribosomal subunit protein uS15 (88 aa).

The protein belongs to the universal ribosomal protein uS15 family. As to quaternary structure, part of the 30S ribosomal subunit. Forms a bridge to the 50S subunit in the 70S ribosome, contacting the 23S rRNA.

Functionally, one of the primary rRNA binding proteins, it binds directly to 16S rRNA where it helps nucleate assembly of the platform of the 30S subunit by binding and bridging several RNA helices of the 16S rRNA. Its function is as follows. Forms an intersubunit bridge (bridge B4) with the 23S rRNA of the 50S subunit in the ribosome. The polypeptide is Small ribosomal subunit protein uS15 (Halothermothrix orenii (strain H 168 / OCM 544 / DSM 9562)).